The primary structure comprises 216 residues: Flavin prenyltransferase UbiX (216 aa).

FMN-binding positions include 9-11 (GAS), S35, and R144. Dimethylallyl phosphate-binding residues include Y174 and R190.

This sequence belongs to the UbiX/PAD1 family.

The catalysed reaction is dimethylallyl phosphate + FMNH2 = prenylated FMNH2 + phosphate. Flavin prenyltransferase that catalyzes the synthesis of the prenylated FMN cofactor (prenyl-FMN) for 4-hydroxy-3-polyprenylbenzoic acid decarboxylase UbiD. The prenyltransferase is metal-independent and links a dimethylallyl moiety from dimethylallyl monophosphate (DMAP) to the flavin N5 and C6 atoms of FMN. The sequence is that of Flavin prenyltransferase UbiX from Streptomyces coelicolor (strain ATCC BAA-471 / A3(2) / M145).